The chain runs to 126 residues: Holo-[acyl-carrier-protein] synthase (126 aa).

D8 and E57 together coordinate Mg(2+).

This sequence belongs to the P-Pant transferase superfamily. AcpS family. Requires Mg(2+) as cofactor.

The protein resides in the cytoplasm. The catalysed reaction is apo-[ACP] + CoA = holo-[ACP] + adenosine 3',5'-bisphosphate + H(+). Transfers the 4'-phosphopantetheine moiety from coenzyme A to a Ser of acyl-carrier-protein. The polypeptide is Holo-[acyl-carrier-protein] synthase (Geobacter metallireducens (strain ATCC 53774 / DSM 7210 / GS-15)).